The following is a 46-amino-acid chain: Large ribosomal subunit protein bL33A (46 aa).

Belongs to the bacterial ribosomal protein bL33 family.

The chain is Large ribosomal subunit protein bL33A from Mesomycoplasma hyopneumoniae (strain 7448) (Mycoplasma hyopneumoniae).